Here is a 166-residue protein sequence, read N- to C-terminus: Probable chemoreceptor glutamine deamidase CheD (166 aa).

It belongs to the CheD family.

The catalysed reaction is L-glutaminyl-[protein] + H2O = L-glutamyl-[protein] + NH4(+). In terms of biological role, probably deamidates glutamine residues to glutamate on methyl-accepting chemotaxis receptors (MCPs), playing an important role in chemotaxis. The polypeptide is Probable chemoreceptor glutamine deamidase CheD (Oceanobacillus iheyensis (strain DSM 14371 / CIP 107618 / JCM 11309 / KCTC 3954 / HTE831)).